Reading from the N-terminus, the 132-residue chain is Small ribosomal subunit protein uS8 (132 aa).

The protein belongs to the universal ribosomal protein uS8 family. As to quaternary structure, part of the 30S ribosomal subunit. Contacts proteins S5 and S12.

One of the primary rRNA binding proteins, it binds directly to 16S rRNA central domain where it helps coordinate assembly of the platform of the 30S subunit. The sequence is that of Small ribosomal subunit protein uS8 from Rickettsia conorii (strain ATCC VR-613 / Malish 7).